The chain runs to 364 residues: Protein trichome birefringence-like 40 (364 aa).

Residues 9–25 form a helical; Signal-anchor for type II membrane protein membrane-spanning segment; that stretch reads LASLSLILFSSFPGLLA. The GDS motif signature appears at 118–120; that stretch reads GDS. Positions 341–355 match the DCXHWCLPGXXDXWN motif motif; it reads DCSHWCLPGLPDTWN.

Belongs to the PC-esterase family. TBL subfamily.

It is found in the membrane. May act as a bridging protein that binds pectin and other cell wall polysaccharides. Probably involved in maintaining esterification of pectins. May be involved in the specific O-acetylation of cell wall polymers. The sequence is that of Protein trichome birefringence-like 40 (TBL40) from Arabidopsis thaliana (Mouse-ear cress).